The following is a 152-amino-acid chain: Deoxyuridine 5'-triphosphate nucleotidohydrolase (152 aa).

Residues 72 to 74, Asn85, and 89 to 91 each bind substrate; these read RSG and TVD.

The protein belongs to the dUTPase family. Requires Mg(2+) as cofactor.

It carries out the reaction dUTP + H2O = dUMP + diphosphate + H(+). Its pathway is pyrimidine metabolism; dUMP biosynthesis; dUMP from dCTP (dUTP route): step 2/2. This enzyme is involved in nucleotide metabolism: it produces dUMP, the immediate precursor of thymidine nucleotides and it decreases the intracellular concentration of dUTP so that uracil cannot be incorporated into DNA. The chain is Deoxyuridine 5'-triphosphate nucleotidohydrolase from Nitrobacter hamburgensis (strain DSM 10229 / NCIMB 13809 / X14).